Consider the following 129-residue polypeptide: Histone H2A (129 aa).

The protein belongs to the histone H2A family. In terms of assembly, the nucleosome is a histone octamer containing two molecules each of H2A, H2B, H3 and H4 assembled in one H3-H4 heterotetramer and two H2A-H2B heterodimers. The octamer wraps approximately 147 bp of DNA.

It localises to the nucleus. The protein localises to the chromosome. Its function is as follows. Core component of nucleosome. Nucleosomes wrap and compact DNA into chromatin, limiting DNA accessibility to the cellular machineries which require DNA as a template. Histones thereby play a central role in transcription regulation, DNA repair, DNA replication and chromosomal stability. DNA accessibility is regulated via a complex set of post-translational modifications of histones, also called histone code, and nucleosome remodeling. This Chlamydomonas reinhardtii (Chlamydomonas smithii) protein is Histone H2A (H2A-II).